Consider the following 266-residue polypeptide: GTP cyclohydrolase III (266 aa).

Belongs to the archaeal-type GTP cyclohydrolase family.

It catalyses the reaction GTP + 3 H2O = 2-amino-5-formylamino-6-(5-phospho-D-ribosylamino)pyrimidin-4(3H)-one + 2 phosphate + 2 H(+). Functionally, catalyzes the formation of 2-amino-5-formylamino-6-ribofuranosylamino-4(3H)-pyrimidinone ribonucleotide monophosphate and inorganic phosphate from GTP. Also has an independent pyrophosphate phosphohydrolase activity. This Methanococcus maripaludis (strain DSM 14266 / JCM 13030 / NBRC 101832 / S2 / LL) protein is GTP cyclohydrolase III.